We begin with the raw amino-acid sequence, 178 residues long: Gluconokinase (178 aa).

Position 19–26 (19–26 (GVSGTGKT)) interacts with ATP.

Belongs to the gluconokinase GntK/GntV family. As to quaternary structure, monomer.

The enzyme catalyses D-gluconate + ATP = 6-phospho-D-gluconate + ADP + H(+). It functions in the pathway carbohydrate acid metabolism; D-gluconate degradation. Activated by magnesium. Phosphorylates gluconate to 6-phosphogluconate. This Gluconobacter oxydans (strain 621H) (Gluconobacter suboxydans) protein is Gluconokinase.